Here is a 146-residue protein sequence, read N- to C-terminus: Ribosome maturation factor RimP (146 aa).

This sequence belongs to the RimP family.

The protein resides in the cytoplasm. In terms of biological role, required for maturation of 30S ribosomal subunits. This chain is Ribosome maturation factor RimP, found in Helicobacter pylori (strain ATCC 700392 / 26695) (Campylobacter pylori).